The following is a 2346-amino-acid chain: Acetyl-CoA carboxylase 1 (2346 aa).

At Met-1 the chain carries N-acetylmethionine. Phosphoserine occurs at positions 5, 23, 25, 29, 34, 48, 50, and 53. Thr-58 is subject to Phosphothreonine. Ser-78 bears the Phosphoserine mark. The residue at position 80 (Ser-80) is a Phosphoserine; by AMPK. In terms of domain architecture, Biotin carboxylation spans 117–618; the sequence is VIEKVLIANN…DTGWLDRLIA (502 aa). The 192-residue stretch at 275–466 folds into the ATP-grasp domain; the sequence is SKRILNVPQE…LPAAQLQIAM (192 aa). 315 to 320 serves as a coordination point for ATP; it reads GGGGKG. Residues Glu-424, Glu-437, and Asn-439 each contribute to the Mg(2+) site. Mn(2+) contacts are provided by Glu-424, Glu-437, and Asn-439. Arg-441 is a catalytic residue. Thr-610 is modified (phosphothreonine). Residues 745-819 enclose the Biotinyl-binding domain; that stretch reads FEKENDPSVL…DPGCVIAKMQ (75 aa). The residue at position 786 (Lys-786) is an N6-biotinyllysine. Phosphoserine occurs at positions 835, 1201, 1216, and 1218. Thr-1227 is subject to Phosphothreonine. Residues Ser-1259, Ser-1263, and Ser-1273 each carry the phosphoserine modification. Lys-1334 bears the N6-acetyllysine mark. The CoA carboxyltransferase N-terminal domain occupies 1576 to 1914; sequence PYVTKDLLQS…SVYSSVPLLN (339 aa). Residues 1576–2234 are carboxyltransferase; it reads PYVTKDLLQS…EDLVKKKIHN (659 aa). 3 residues coordinate CoA: Arg-1823, Lys-2127, and Arg-2129. The CoA carboxyltransferase C-terminal domain maps to 1918-2234; sequence PIDRVIEFVP…EDLVKKKIHN (317 aa). The residue at position 2153 (Thr-2153) is a Phosphothreonine.

As to quaternary structure, monomer, homodimer, and homotetramer. Can form filamentous polymers. Interacts in its inactive phosphorylated form with the BRCT domains of BRCA1 which prevents ACACA dephosphorylation and inhibits lipid synthesis. Interacts with MID1IP1; interaction with MID1IP1 promotes oligomerization and increases its activity. Requires Mg(2+) as cofactor. It depends on Mn(2+) as a cofactor. The cofactor is biotin. Phosphorylation on Ser-1263 is required for interaction with BRCA1. Post-translationally, phosphorylation at Ser-80 by AMPK inactivates enzyme activity. In terms of processing, the biotin cofactor is covalently attached to the central biotinyl-binding domain and is required for the catalytic activity. As to expression, expressed at high levels in mammary gland.

It is found in the cytoplasm. It localises to the cytosol. The enzyme catalyses hydrogencarbonate + acetyl-CoA + ATP = malonyl-CoA + ADP + phosphate + H(+). It functions in the pathway lipid metabolism; malonyl-CoA biosynthesis; malonyl-CoA from acetyl-CoA: step 1/1. Its activity is regulated as follows. Inhibited by phosphorylation. Citrate promotes oligomerization of the protein into filaments that correspond to the most active form of the carboxylase. In terms of biological role, cytosolic enzyme that catalyzes the carboxylation of acetyl-CoA to malonyl-CoA, the first and rate-limiting step of de novo fatty acid biosynthesis. This is a 2 steps reaction starting with the ATP-dependent carboxylation of the biotin carried by the biotin carboxyl carrier (BCC) domain followed by the transfer of the carboxyl group from carboxylated biotin to acetyl-CoA. The polypeptide is Acetyl-CoA carboxylase 1 (Ovis aries (Sheep)).